The chain runs to 457 residues: Bifunctional protein GlmU (457 aa).

The segment at 1–232 (MNNLAAVILA…PAEVMGINDR (232 aa)) is pyrophosphorylase. UDP-N-acetyl-alpha-D-glucosamine contacts are provided by residues 9-12 (LAAG), K23, Q75, and 80-81 (GT). D105 is a binding site for Mg(2+). The UDP-N-acetyl-alpha-D-glucosamine site is built by G142, E157, N172, and N230. Residue N230 participates in Mg(2+) binding. A linker region spans residues 233 to 253 (AQLAEAGQLLRGRINKALMLD). Positions 254–457 (GTTLIDPQTT…NKEGWKLKKK (204 aa)) are N-acetyltransferase. R336 and K354 together coordinate UDP-N-acetyl-alpha-D-glucosamine. H366 serves as the catalytic Proton acceptor. Positions 369 and 380 each coordinate UDP-N-acetyl-alpha-D-glucosamine. Residues 389–390 (NY), S408, A426, and R443 contribute to the acetyl-CoA site.

The protein in the N-terminal section; belongs to the N-acetylglucosamine-1-phosphate uridyltransferase family. This sequence in the C-terminal section; belongs to the transferase hexapeptide repeat family. As to quaternary structure, homotrimer. It depends on Mg(2+) as a cofactor.

The protein localises to the cytoplasm. It carries out the reaction alpha-D-glucosamine 1-phosphate + acetyl-CoA = N-acetyl-alpha-D-glucosamine 1-phosphate + CoA + H(+). The enzyme catalyses N-acetyl-alpha-D-glucosamine 1-phosphate + UTP + H(+) = UDP-N-acetyl-alpha-D-glucosamine + diphosphate. It participates in nucleotide-sugar biosynthesis; UDP-N-acetyl-alpha-D-glucosamine biosynthesis; N-acetyl-alpha-D-glucosamine 1-phosphate from alpha-D-glucosamine 6-phosphate (route II): step 2/2. It functions in the pathway nucleotide-sugar biosynthesis; UDP-N-acetyl-alpha-D-glucosamine biosynthesis; UDP-N-acetyl-alpha-D-glucosamine from N-acetyl-alpha-D-glucosamine 1-phosphate: step 1/1. Its pathway is bacterial outer membrane biogenesis; LPS lipid A biosynthesis. Catalyzes the last two sequential reactions in the de novo biosynthetic pathway for UDP-N-acetylglucosamine (UDP-GlcNAc). The C-terminal domain catalyzes the transfer of acetyl group from acetyl coenzyme A to glucosamine-1-phosphate (GlcN-1-P) to produce N-acetylglucosamine-1-phosphate (GlcNAc-1-P), which is converted into UDP-GlcNAc by the transfer of uridine 5-monophosphate (from uridine 5-triphosphate), a reaction catalyzed by the N-terminal domain. The polypeptide is Bifunctional protein GlmU (Geotalea uraniireducens (strain Rf4) (Geobacter uraniireducens)).